The sequence spans 150 residues: Large ribosomal subunit protein bL9 (150 aa).

This sequence belongs to the bacterial ribosomal protein bL9 family.

Binds to the 23S rRNA. In Shewanella sp. (strain MR-4), this protein is Large ribosomal subunit protein bL9.